The chain runs to 1411 residues: DNA-directed RNA polymerase subunit beta' (1411 aa).

The Zn(2+) site is built by C70, C72, C85, and C88. Mg(2+)-binding residues include D460, D462, and D464. Residues C814, C889, C896, and C899 each coordinate Zn(2+). Residues 1387–1399 show a composition bias toward polar residues; the sequence is RSTSSGTEITSPS. The disordered stretch occupies residues 1387–1411; the sequence is RSTSSGTEITSPSKDAIPLGSKVGF.

Belongs to the RNA polymerase beta' chain family. The RNAP catalytic core consists of 2 alpha, 1 beta, 1 beta' and 1 omega subunit. When a sigma factor is associated with the core the holoenzyme is formed, which can initiate transcription. Mg(2+) is required as a cofactor. Requires Zn(2+) as cofactor.

The catalysed reaction is RNA(n) + a ribonucleoside 5'-triphosphate = RNA(n+1) + diphosphate. Its function is as follows. DNA-dependent RNA polymerase catalyzes the transcription of DNA into RNA using the four ribonucleoside triphosphates as substrates. The chain is DNA-directed RNA polymerase subunit beta' from Xylella fastidiosa (strain M12).